Reading from the N-terminus, the 89-residue chain is Transcription elongation factor 1 homolog (89 aa).

Residues cysteine 25, cysteine 28, cysteine 49, and cysteine 52 each coordinate Zn(2+).

The protein belongs to the ELOF1 family.

It localises to the nucleus. Functionally, transcription elongation factor implicated in the maintenance of proper chromatin structure in actively transcribed regions. This is Transcription elongation factor 1 homolog from Oryza sativa subsp. japonica (Rice).